The sequence spans 62 residues: Beta-defensin 37 (62 aa).

The signal sequence occupies residues 1 to 16 (MKFSYFLLLLLSLSNF). 3 disulfides stabilise this stretch: cysteine 29/cysteine 58, cysteine 36/cysteine 51, and cysteine 41/cysteine 59.

Belongs to the beta-defensin family. In terms of tissue distribution, only expressed in epididymis (corpus and cauda).

It localises to the secreted. Its function is as follows. Has antibacterial activity. In Mus musculus (Mouse), this protein is Beta-defensin 37 (Defb37).